The primary structure comprises 424 residues: Protein CLP1 homolog (424 aa).

ATP-binding positions include Glu19, Lys60, and 122-127 (DVGKST).

It belongs to the Clp1 family. Clp1 subfamily.

The protein localises to the nucleus. Functionally, required for endonucleolytic cleavage during polyadenylation-dependent pre-mRNA 3'-end formation. This is Protein CLP1 homolog (cbc) from Aedes aegypti (Yellowfever mosquito).